The sequence spans 142 residues: Large ribosomal subunit protein uL11 (142 aa).

Belongs to the universal ribosomal protein uL11 family. In terms of assembly, part of the ribosomal stalk of the 50S ribosomal subunit. Interacts with L10 and the large rRNA to form the base of the stalk. L10 forms an elongated spine to which L12 dimers bind in a sequential fashion forming a multimeric L10(L12)X complex. Post-translationally, one or more lysine residues are methylated.

Forms part of the ribosomal stalk which helps the ribosome interact with GTP-bound translation factors. The sequence is that of Large ribosomal subunit protein uL11 from Magnetococcus marinus (strain ATCC BAA-1437 / JCM 17883 / MC-1).